A 417-amino-acid polypeptide reads, in one-letter code: Pelargonidin 3-O-(6-caffeoylglucoside) 5-O-(6-O-malonylglucoside) 4'''-malonyltransferase (417 aa).

Active-site proton acceptor residues include His147 and Asp360.

The protein belongs to the plant acyltransferase family. In terms of assembly, monomer. In terms of tissue distribution, expressed at higher level in recently opened, fully pigmented flowers.

It catalyses the reaction 4'''-demalonylsalvianin + malonyl-CoA = salvianin + CoA. It functions in the pathway pigment biosynthesis; anthocyanin biosynthesis. With respect to regulation, inhibited by the following metal ions: Cd(2+), Cu(2+), Fe(2+), Hg(2+) and Zn(2+). Activity is strongly inhibited by CoA-SH and partially inhibited by acetyl-CoA, caffeic acid and bisdemalonylsalvianin. In terms of biological role, catalyzes the transfer of the malonyl group from malonyl-CoA to the 4'''-hydroxyl group of the 5-glucosyl moiety of anthocyanins. Anthocyanins are ubiquitous colored pigments that are responsible for petal color. This is Pelargonidin 3-O-(6-caffeoylglucoside) 5-O-(6-O-malonylglucoside) 4'''-malonyltransferase from Salvia splendens (Scarlet sage).